We begin with the raw amino-acid sequence, 209 residues long: Orotate phosphoribosyltransferase (209 aa).

5-phospho-alpha-D-ribose 1-diphosphate is bound by residues arginine 96, lysine 100, histidine 102, and 122 to 130 (EDLISTGGS). Serine 126 provides a ligand contact to orotate.

Belongs to the purine/pyrimidine phosphoribosyltransferase family. PyrE subfamily. As to quaternary structure, homodimer. The cofactor is Mg(2+).

The catalysed reaction is orotidine 5'-phosphate + diphosphate = orotate + 5-phospho-alpha-D-ribose 1-diphosphate. The protein operates within pyrimidine metabolism; UMP biosynthesis via de novo pathway; UMP from orotate: step 1/2. In terms of biological role, catalyzes the transfer of a ribosyl phosphate group from 5-phosphoribose 1-diphosphate to orotate, leading to the formation of orotidine monophosphate (OMP). The chain is Orotate phosphoribosyltransferase from Streptococcus pyogenes serotype M3 (strain ATCC BAA-595 / MGAS315).